The primary structure comprises 983 residues: Nitrate reductase [NADPH] (983 aa).

2 stretches are compositionally biased toward low complexity: residues 1 to 14 and 26 to 48; these read MTISTTSSSTSSKT and SSSSSPASSRSSSATTPEPSSPT. Positions 1 to 50 are disordered; the sequence is MTISTTSSSTSSKTSSEKGDDLKGFSSSSSPASSRSSSATTPEPSSPTVL. Residue Cys184 coordinates Mo-molybdopterin. The 78-residue stretch at 585–662 folds into the Cytochrome b5 heme-binding domain; that stretch reads DTIITAADLA…LRDFHLGRLE (78 aa). Heme is bound by residues His622 and His645. An FAD-binding FR-type domain is found at 688–815; that stretch reads KKWRATRLVS…KGPLGSFTYL (128 aa). FAD contacts are provided by residues 746–749, 763–767, Phe768, Phe780, 784–786, Ser841, and Thr844; these read RAYT, LIKVY, and KMT. 952-961 contacts NADP(+); it reads LALVCGPPPM.

Belongs to the nitrate reductase family. In terms of assembly, homodimer. FAD is required as a cofactor. The cofactor is heme. Requires Mo-molybdopterin as cofactor.

The enzyme catalyses nitrite + NADP(+) + H2O = nitrate + NADPH + H(+). It participates in nitrogen metabolism; nitrate reduction (assimilation). Nitrate reductase is a key enzyme involved in the first step of nitrate assimilation in plants, fungi and bacteria. The polypeptide is Nitrate reductase [NADPH] (NAR1) (Mycosarcoma maydis (Corn smut fungus)).